A 653-amino-acid polypeptide reads, in one-letter code: Mannosyl-oligosaccharide 1,2-alpha-mannosidase IA (653 aa).

Topologically, residues 1–41 (MPVGGLLPLFSSPAGGVLGGGLGGGGGRKGSGPAALRLTEK) are cytoplasmic. Residues 42–62 (FVLLLVFSAFITLCFGAIFFL) traverse the membrane as a helical; Signal-anchor for type II membrane protein segment. The Lumenal segment spans residues 63-653 (PDSSKLLSGV…DKKEVEIREE (591 aa)). The disordered stretch occupies residues 81-116 (QPAADHKPGPGARAEDAAEGRARRREEGAPGDPEAA). A compositionally biased stretch (basic and acidic residues) spans 84–108 (ADHKPGPGARAEDAAEGRARRREEG). Cysteine 476 and cysteine 508 are joined by a disulfide. N-linked (GlcNAc...) asparagine glycosylation occurs at asparagine 513. Residue glutamate 522 is the Proton donor of the active site.

The protein belongs to the glycosyl hydrolase 47 family. It depends on Ca(2+) as a cofactor.

It localises to the golgi apparatus membrane. The catalysed reaction is N(4)-(alpha-D-Man-(1-&gt;2)-alpha-D-Man-(1-&gt;2)-alpha-D-Man-(1-&gt;3)-[alpha-D-Man-(1-&gt;2)-alpha-D-Man-(1-&gt;3)-[alpha-D-Man-(1-&gt;2)-alpha-D-Man-(1-&gt;6)]-alpha-D-Man-(1-&gt;6)]-beta-D-Man-(1-&gt;4)-beta-D-GlcNAc-(1-&gt;4)-beta-D-GlcNAc)-L-asparaginyl-[protein] (N-glucan mannose isomer 9A1,2,3B1,2,3) + 4 H2O = N(4)-(alpha-D-Man-(1-&gt;3)-[alpha-D-Man-(1-&gt;3)-[alpha-D-Man-(1-&gt;6)]-alpha-D-Man-(1-&gt;6)]-beta-D-Man-(1-&gt;4)-beta-D-GlcNAc-(1-&gt;4)-beta-D-GlcNAc)-L-asparaginyl-[protein] (N-glucan mannose isomer 5A1,2) + 4 beta-D-mannose. It carries out the reaction N(4)-(alpha-D-Man-(1-&gt;2)-alpha-D-Man-(1-&gt;2)-alpha-D-Man-(1-&gt;3)-[alpha-D-Man-(1-&gt;3)-[alpha-D-Man-(1-&gt;2)-alpha-D-Man-(1-&gt;6)]-alpha-D-Man-(1-&gt;6)]-beta-D-Man-(1-&gt;4)-beta-D-GlcNAc-(1-&gt;4)-beta-D-GlcNAc)-L-asparaginyl-[protein] (N-glucan mannose isomer 8A1,2,3B1,3) + 3 H2O = N(4)-(alpha-D-Man-(1-&gt;3)-[alpha-D-Man-(1-&gt;3)-[alpha-D-Man-(1-&gt;6)]-alpha-D-Man-(1-&gt;6)]-beta-D-Man-(1-&gt;4)-beta-D-GlcNAc-(1-&gt;4)-beta-D-GlcNAc)-L-asparaginyl-[protein] (N-glucan mannose isomer 5A1,2) + 3 beta-D-mannose. It functions in the pathway protein modification; protein glycosylation. With respect to regulation, inhibited by both 1-deoxymannojirimycin and kifunensine. In terms of biological role, involved in the maturation of Asn-linked oligosaccharides. Progressively trim alpha-1,2-linked mannose residues from Man(9)GlcNAc(2) to produce Man(5)GlcNAc(2). The protein is Mannosyl-oligosaccharide 1,2-alpha-mannosidase IA (MAN1A1) of Homo sapiens (Human).